Reading from the N-terminus, the 1046-residue chain is Hemoglobin-haptoglobin-binding protein A (1046 aa).

Residues 1–24 form the signal peptide; it reads MTNFRLNLLAYSVMLGLTAGVAYA. A run of 4 repeats spans residues 26–29, 30–33, 34–37, and 38–41. A 4 X 4 AA tandem repeats of Q-P-T-N region spans residues 26-41; it reads QPTNQPTNQPTNQPTN. The short motif at 51–58 is the TonB box element; the sequence is EQINVLGS. The TBDR plug domain occupies 61 to 188; the sequence is HNDNTPPKIA…LGGSVSFDTK (128 aa). The TBDR beta-barrel domain maps to 196–1046; the sequence is NKNYYASYKR…NYRMSVQFEF (851 aa). Positions 1029–1046 match the TonB C-terminal box motif; that stretch reads NRFYAPGRNYRMSVQFEF.

It belongs to the TonB-dependent receptor family. Hemoglobin/haptoglobin binding protein subfamily.

The protein localises to the cell outer membrane. In terms of biological role, acts as a receptor for the hemoglobin/haptoglobin complex of the human host and is required for heme uptake. Does not bind hemoglobin alone. This chain is Hemoglobin-haptoglobin-binding protein A (hhuA), found in Haemophilus influenzae.